Here is a 298-residue protein sequence, read N- to C-terminus: N-acetylmuramic acid 6-phosphate etherase (298 aa).

An SIS domain is found at 55-218 (IHAQVSGGGR…STGLMIKSGK (164 aa)). Glutamate 83 (proton donor) is an active-site residue. Glutamate 114 is an active-site residue.

Belongs to the GCKR-like family. MurNAc-6-P etherase subfamily. In terms of assembly, homodimer.

It carries out the reaction N-acetyl-D-muramate 6-phosphate + H2O = N-acetyl-D-glucosamine 6-phosphate + (R)-lactate. It functions in the pathway amino-sugar metabolism; 1,6-anhydro-N-acetylmuramate degradation. It participates in amino-sugar metabolism; N-acetylmuramate degradation. The protein operates within cell wall biogenesis; peptidoglycan recycling. In terms of biological role, specifically catalyzes the cleavage of the D-lactyl ether substituent of MurNAc 6-phosphate, producing GlcNAc 6-phosphate and D-lactate. Together with AnmK, is also required for the utilization of anhydro-N-acetylmuramic acid (anhMurNAc) either imported from the medium or derived from its own cell wall murein, and thus plays a role in cell wall recycling. The sequence is that of N-acetylmuramic acid 6-phosphate etherase from Shigella dysenteriae serotype 1 (strain Sd197).